The sequence spans 158 residues: S-ribosylhomocysteine lyase (158 aa).

The Fe cation site is built by histidine 55, histidine 59, and cysteine 127.

The protein belongs to the LuxS family. In terms of assembly, homodimer. Fe cation is required as a cofactor.

The catalysed reaction is S-(5-deoxy-D-ribos-5-yl)-L-homocysteine = (S)-4,5-dihydroxypentane-2,3-dione + L-homocysteine. Involved in the synthesis of autoinducer 2 (AI-2) which is secreted by bacteria and is used to communicate both the cell density and the metabolic potential of the environment. The regulation of gene expression in response to changes in cell density is called quorum sensing. Catalyzes the transformation of S-ribosylhomocysteine (RHC) to homocysteine (HC) and 4,5-dihydroxy-2,3-pentadione (DPD). This Geobacillus thermodenitrificans (strain NG80-2) protein is S-ribosylhomocysteine lyase.